Reading from the N-terminus, the 522-residue chain is MIRRALISVSDKTGLLPLARRLAEKGVEILSTGGTQRALADAGVPVIGVEAYTGSPEVMDGRVKTLHPRVHGGILMRGAIDDEDLARLGGAPIDLVVCNLYPFEATVRKPGVTHPEIIENIDIGGPSMVRSAAKNHARVAVVVDPADYDAVLAEIDRQGEVSSATRRRLATKAFAHTAAYDGMVSGYLSSLPEEGEPSAAEREAYPRFLTLALERAYPLRYGENPHQSGAFYRERGAAAGSLALAESLGAGGKELSFNNLVDVDAAFEAVREFTQPAAVVVKHTNPCGVATGDSLAAAYRTARDADAVSAFGGIVALNREVDRAAAEVLVETFLECVVAPAYTPDALEVLRTKKNLRLLATGALLPADHRELTFKRVGGGLVVQERDASAAGEVRGGRVVAKRAPTEEEIEALDLGWRVCKHVKSNAIVLAIPGRTVGIGAGQMSRVESVRIACSKAGERARGSVLASDAFFPFPDNVVLAAEHGITAVAQPGGSVKDAEVIAAADAAGIAMVFTGARHFRH.

One can recognise an MGS-like domain in the interval Met1–Val143.

It belongs to the PurH family.

The enzyme catalyses (6R)-10-formyltetrahydrofolate + 5-amino-1-(5-phospho-beta-D-ribosyl)imidazole-4-carboxamide = 5-formamido-1-(5-phospho-D-ribosyl)imidazole-4-carboxamide + (6S)-5,6,7,8-tetrahydrofolate. It catalyses the reaction IMP + H2O = 5-formamido-1-(5-phospho-D-ribosyl)imidazole-4-carboxamide. Its pathway is purine metabolism; IMP biosynthesis via de novo pathway; 5-formamido-1-(5-phospho-D-ribosyl)imidazole-4-carboxamide from 5-amino-1-(5-phospho-D-ribosyl)imidazole-4-carboxamide (10-formyl THF route): step 1/1. The protein operates within purine metabolism; IMP biosynthesis via de novo pathway; IMP from 5-formamido-1-(5-phospho-D-ribosyl)imidazole-4-carboxamide: step 1/1. The polypeptide is Bifunctional purine biosynthesis protein PurH (Sorangium cellulosum (strain So ce56) (Polyangium cellulosum (strain So ce56))).